The following is a 511-amino-acid chain: 2,3-bisphosphoglycerate-independent phosphoglycerate mutase (511 aa).

Asp12 is a Mn(2+) binding site. Tyr36 bears the Phosphotyrosine mark. Ser62 is a Mn(2+) binding site. Ser62 (phosphoserine intermediate) is an active-site residue. Substrate-binding positions include His123, 153–154 (RD), Arg185, Arg191, 261–264 (RPDR), and Lys336. 5 residues coordinate Mn(2+): Asp403, His407, Asp444, His445, and His462.

The protein belongs to the BPG-independent phosphoglycerate mutase family. As to quaternary structure, monomer. Mn(2+) is required as a cofactor.

The enzyme catalyses (2R)-2-phosphoglycerate = (2R)-3-phosphoglycerate. Its pathway is carbohydrate degradation; glycolysis; pyruvate from D-glyceraldehyde 3-phosphate: step 3/5. Essential for rapid growth and for sporulation. Catalyzes the interconversion of 2-phosphoglycerate and 3-phosphoglycerate. In Bacillus velezensis (strain DSM 23117 / BGSC 10A6 / LMG 26770 / FZB42) (Bacillus amyloliquefaciens subsp. plantarum), this protein is 2,3-bisphosphoglycerate-independent phosphoglycerate mutase.